The following is a 208-amino-acid chain: Protein GrpE (208 aa).

Over residues 1-12 (MTNKDESVKKNT) the composition is skewed to basic and acidic residues. The segment at 1 to 51 (MTNKDESVKKNTESTVEETNVKQNIDDSVEQAEESKGHLQDEAIEETSDEN) is disordered. Positions 13 to 23 (ESTVEETNVKQ) are enriched in polar residues. Positions 42-51 (EAIEETSDEN) are enriched in acidic residues.

It belongs to the GrpE family. As to quaternary structure, homodimer.

Its subcellular location is the cytoplasm. In terms of biological role, participates actively in the response to hyperosmotic and heat shock by preventing the aggregation of stress-denatured proteins, in association with DnaK and GrpE. It is the nucleotide exchange factor for DnaK and may function as a thermosensor. Unfolded proteins bind initially to DnaJ; upon interaction with the DnaJ-bound protein, DnaK hydrolyzes its bound ATP, resulting in the formation of a stable complex. GrpE releases ADP from DnaK; ATP binding to DnaK triggers the release of the substrate protein, thus completing the reaction cycle. Several rounds of ATP-dependent interactions between DnaJ, DnaK and GrpE are required for fully efficient folding. This chain is Protein GrpE, found in Staphylococcus aureus (strain COL).